A 224-amino-acid chain; its full sequence is Ribosomal RNA small subunit methyltransferase G (224 aa).

Residues Gly89, Phe94, 140 to 141, and Arg153 contribute to the S-adenosyl-L-methionine site; that span reads AE.

It belongs to the methyltransferase superfamily. RNA methyltransferase RsmG family.

Its subcellular location is the cytoplasm. In terms of biological role, specifically methylates the N7 position of a guanine in 16S rRNA. The sequence is that of Ribosomal RNA small subunit methyltransferase G from Bacteroides fragilis (strain YCH46).